The chain runs to 341 residues: Phosphatidylserine decarboxylase proenzyme (341 aa).

Catalysis depends on charge relay system; for autoendoproteolytic cleavage activity residues D90, H147, and S254. S254 serves as the catalytic Schiff-base intermediate with substrate; via pyruvic acid; for decarboxylase activity. Residue S254 is modified to Pyruvic acid (Ser); by autocatalysis. Positions 287–341 are disordered; that stretch reads RQDEQTPVVFPEGTELEENDAAQPPVAATSEPVQADGQNPAAEVSGQTGHKPDAP.

The protein belongs to the phosphatidylserine decarboxylase family. PSD-B subfamily. Prokaryotic type I sub-subfamily. In terms of assembly, heterodimer of a large membrane-associated beta subunit and a small pyruvoyl-containing alpha subunit. Pyruvate is required as a cofactor. In terms of processing, is synthesized initially as an inactive proenzyme. Formation of the active enzyme involves a self-maturation process in which the active site pyruvoyl group is generated from an internal serine residue via an autocatalytic post-translational modification. Two non-identical subunits are generated from the proenzyme in this reaction, and the pyruvate is formed at the N-terminus of the alpha chain, which is derived from the carboxyl end of the proenzyme. The autoendoproteolytic cleavage occurs by a canonical serine protease mechanism, in which the side chain hydroxyl group of the serine supplies its oxygen atom to form the C-terminus of the beta chain, while the remainder of the serine residue undergoes an oxidative deamination to produce ammonia and the pyruvoyl prosthetic group on the alpha chain. During this reaction, the Ser that is part of the protease active site of the proenzyme becomes the pyruvoyl prosthetic group, which constitutes an essential element of the active site of the mature decarboxylase.

It localises to the cell membrane. The catalysed reaction is a 1,2-diacyl-sn-glycero-3-phospho-L-serine + H(+) = a 1,2-diacyl-sn-glycero-3-phosphoethanolamine + CO2. It functions in the pathway phospholipid metabolism; phosphatidylethanolamine biosynthesis; phosphatidylethanolamine from CDP-diacylglycerol: step 2/2. Its function is as follows. Catalyzes the formation of phosphatidylethanolamine (PtdEtn) from phosphatidylserine (PtdSer). The chain is Phosphatidylserine decarboxylase proenzyme from Pectobacterium atrosepticum (strain SCRI 1043 / ATCC BAA-672) (Erwinia carotovora subsp. atroseptica).